A 206-amino-acid polypeptide reads, in one-letter code: ATP phosphoribosyltransferase (206 aa).

The protein belongs to the ATP phosphoribosyltransferase family. Short subfamily. Heteromultimer composed of HisG and HisZ subunits.

The protein localises to the cytoplasm. The enzyme catalyses 1-(5-phospho-beta-D-ribosyl)-ATP + diphosphate = 5-phospho-alpha-D-ribose 1-diphosphate + ATP. The protein operates within amino-acid biosynthesis; L-histidine biosynthesis; L-histidine from 5-phospho-alpha-D-ribose 1-diphosphate: step 1/9. Its function is as follows. Catalyzes the condensation of ATP and 5-phosphoribose 1-diphosphate to form N'-(5'-phosphoribosyl)-ATP (PR-ATP). Has a crucial role in the pathway because the rate of histidine biosynthesis seems to be controlled primarily by regulation of HisG enzymatic activity. This is ATP phosphoribosyltransferase from Sulfurovum sp. (strain NBC37-1).